The sequence spans 229 residues: uncharacterized protein (229 aa).

The segment at 61 to 229 (MQAEDKVSKP…TESEDKPKRG (169 aa)) is disordered. Residues 109–128 (QQEKQQPEKAVVEQQEKQQP) are compositionally biased toward basic and acidic residues. The span at 166–194 (QPEQPERQQQAQPERQQQAQPERQQQAQP) shows a compositional bias: low complexity. Positions 195 to 204 (EEAEDAEQEP) are enriched in acidic residues. The span at 218–229 (TQTESEDKPKRG) shows a compositional bias: basic and acidic residues.

This is an uncharacterized protein from Frog virus 3 (isolate Goorha) (FV-3).